We begin with the raw amino-acid sequence, 802 residues long: Penicillin G acylase (802 aa).

An N-terminal signal peptide occupies residues 1 to 26; sequence MKMKWLISVIILFVFIFPQNLVFAGE. Position 177 (Glu177) interacts with Ca(2+). Positions 235-265 are cleaved as a propeptide — spacer peptide; sequence SAVIKASEKVGKERENFVQSSEELGLPLKIG. Residue Ser266 is the Nucleophile of the active site. Ca(2+) is bound at residue Asp341.

It belongs to the peptidase S45 family. In terms of assembly, heterodimer of an alpha subunit and a beta subunit processed from the same precursor. Ca(2+) is required as a cofactor.

It is found in the secreted. It carries out the reaction a penicillin + H2O = 6-aminopenicillanate + a carboxylate. In Rhizobium viscosum (Arthrobacter viscosus), this protein is Penicillin G acylase (pac).